A 467-amino-acid polypeptide reads, in one-letter code: Ribosome biogenesis protein YTM1 (467 aa).

A ubiquitin-like (UBL) domain region spans residues 8 to 95 (IKIKFFTNEE…ETFLSLEYTR (88 aa)). Positions 105–467 (SFNNEDWISS…QINKGSDISK (363 aa)) are sufficient for interaction with ERB1 and association with 66S pre-ribosomes. WD repeat units follow at residues 120-159 (KTLP…EKQY), 161-199 (GHSG…GSIP), 216-255 (GHKA…MTTI), 293-333 (SHTQ…CIDT), 335-374 (STGY…NTTE), 382-422 (GHTN…SLYT), and 432-467 (KGAD…DISK).

Belongs to the WD repeat WDR12/YTM1 family. As to quaternary structure, component of the NOP7 complex, composed of ERB1, NOP7 and YTM1. The complex is held together by ERB1, which interacts with NOP7 via its N-terminal domain and with YTM1 via a high-affinity interaction between the seven-bladed beta-propeller domains of the 2 proteins. The NOP7 complex associates with the 66S pre-ribosome. Interacts (via UBL domain) with MDN1 (via VWFA/MIDAS domain).

It is found in the nucleus. The protein resides in the nucleolus. It localises to the nucleoplasm. Component of the NOP7 complex, which is required for maturation of the 25S and 5.8S ribosomal RNAs and formation of the 60S ribosome. The protein is Ribosome biogenesis protein YTM1 of Scheffersomyces stipitis (strain ATCC 58785 / CBS 6054 / NBRC 10063 / NRRL Y-11545) (Yeast).